Reading from the N-terminus, the 177-residue chain is Small ribosomal subunit protein uS5 (177 aa).

The S5 DRBM domain maps to Leu-21–Ile-84.

Belongs to the universal ribosomal protein uS5 family. Part of the 30S ribosomal subunit. Contacts proteins S4 and S8.

Functionally, with S4 and S12 plays an important role in translational accuracy. Its function is as follows. Located at the back of the 30S subunit body where it stabilizes the conformation of the head with respect to the body. This is Small ribosomal subunit protein uS5 from Nitrosomonas eutropha (strain DSM 101675 / C91 / Nm57).